Here is a 247-residue protein sequence, read N- to C-terminus: Ras-like protein family member 11B (247 aa).

The small GTPase-like stretch occupies residues 29-247 (ASSRVIKIAV…SAKVRTATSV (219 aa)). Residues 40–47 (GGSGVGKT), 87–91 (DTPGV), and 152–155 (NKAD) each bind GTP. Positions 205–228 (QNTGTPERRKNSLIPRPKSPNMQD) are disordered.

It belongs to the small GTPase superfamily. Ras family.

The catalysed reaction is GTP + H2O = GDP + phosphate + H(+). The protein is Ras-like protein family member 11B of Xenopus tropicalis (Western clawed frog).